Reading from the N-terminus, the 626-residue chain is Transketolase-like protein 2 (626 aa).

Thiamine diphosphate contacts are provided by residues Ser41, His78, and 124–126 (GSL). Asp156 contacts Mg(2+). Residues Gly157 and Asn186 each contribute to the thiamine diphosphate site. 2 residues coordinate Mg(2+): Asn186 and Leu188. Thiamine diphosphate-binding residues include Lys248 and His262. His262 and Ser349 together coordinate substrate. Positions 370 and 396 each coordinate thiamine diphosphate. Glu370 functions as the Proton donor in the catalytic mechanism. The substrate site is built by His420 and Asp428. Position 432 (Gln432) interacts with thiamine diphosphate.

The protein belongs to the transketolase family. As to quaternary structure, homodimer. Mg(2+) serves as cofactor. Requires Ca(2+) as cofactor. The cofactor is Mn(2+). Co(2+) is required as a cofactor. It depends on thiamine diphosphate as a cofactor. Overexpressed in hepatoma cancer cells.

It carries out the reaction D-sedoheptulose 7-phosphate + D-glyceraldehyde 3-phosphate = aldehydo-D-ribose 5-phosphate + D-xylulose 5-phosphate. In terms of biological role, plays an essential role in total transketolase activity and cell proliferation in cancer cells; after transfection with anti-TKTL1 siRNA, total transketolase activity dramatically decreases and proliferation was significantly inhibited in cancer cells. Plays a pivotal role in carcinogenesis. The sequence is that of Transketolase-like protein 2 (TKTL2) from Homo sapiens (Human).